The primary structure comprises 92 residues: Putative membrane protein insertion efficiency factor (92 aa).

This sequence belongs to the UPF0161 family.

The protein resides in the cell inner membrane. In terms of biological role, could be involved in insertion of integral membrane proteins into the membrane. The sequence is that of Putative membrane protein insertion efficiency factor from Synechococcus sp. (strain CC9605).